The primary structure comprises 1103 residues: Detocs histidine-protein kinase DtcA (1103 aa).

Residue H758 is modified to Phosphohistidine; by autocatalysis. The stretch at T818–E851 is one TPR repeat.

Post-translationally, autophosphorylated.

It carries out the reaction ATP + protein L-histidine = ADP + protein N-phospho-L-histidine.. Its function is as follows. Sensor-kinase member of the two-component regulatory system Detocs that confers resistance to bacteriophage. When the system (DtcA-DtcB-DtcC) is expressed in a susceptible E.coli (strain MG1655) it confers resistance to bacteriophages T2, T4, T5, T7, SECphi4, SECphi6 and SECphi27; the level of resistance varies, resistance to T2, T7 and SECphi4 is not very high. DtcA (this subunit) probably autophosphorylates upon sensing viral infection, and subsequently transfers the phosphate signal to DtcC which activates it, leading to an antiviral defense; DtcB may scavenge phosphorylation signals from accidental activation of DtcA. The sequence is that of Detocs histidine-protein kinase DtcA from Enterobacter cloacae (strain JD6301).